A 140-amino-acid polypeptide reads, in one-letter code: Natriuretic peptides A (140 aa).

A signal peptide spans M1–A24. Residues N25 to R111 constitute a propeptide that is removed on maturation. The interval A55–L94 is disordered. Residues I71–D80 are compositionally biased toward acidic residues. A disulfide bond links C118 and C134.

The protein belongs to the natriuretic peptide family. In terms of processing, cleaved by CORIN upon secretion to produce the functional hormone.

It localises to the secreted. Its function is as follows. Hormone playing a key role in cardiovascular homeostasis through regulation of natriuresis, diuresis, and vasodilation. Specifically binds and stimulates the cGMP production of the NPR1 receptor. Binds the clearance receptor NPR3. This Gallus gallus (Chicken) protein is Natriuretic peptides A (NPPA).